Reading from the N-terminus, the 292-residue chain is Ribosomal RNA small subunit methyltransferase A (292 aa).

Positions 28, 30, 55, 76, 101, and 126 each coordinate S-adenosyl-L-methionine.

The protein belongs to the class I-like SAM-binding methyltransferase superfamily. rRNA adenine N(6)-methyltransferase family. RsmA subfamily.

It localises to the cytoplasm. It carries out the reaction adenosine(1518)/adenosine(1519) in 16S rRNA + 4 S-adenosyl-L-methionine = N(6)-dimethyladenosine(1518)/N(6)-dimethyladenosine(1519) in 16S rRNA + 4 S-adenosyl-L-homocysteine + 4 H(+). In terms of biological role, specifically dimethylates two adjacent adenosines (A1518 and A1519) in the loop of a conserved hairpin near the 3'-end of 16S rRNA in the 30S particle. May play a critical role in biogenesis of 30S subunits. The polypeptide is Ribosomal RNA small subunit methyltransferase A (Bacillus cereus (strain G9842)).